A 602-amino-acid chain; its full sequence is ATP-dependent DNA helicase II subunit 1 (602 aa).

The 216-residue stretch at 268–483 folds into the Ku domain; it reads FQCPLILDEK…YDNMKKVTQS (216 aa). Ser370, Ser371, and Ser372 each carry phosphoserine.

The protein belongs to the ku70 family. As to quaternary structure, heterodimer of YKU70/HDF1 and YKU80/HDF2. Post-translationally, sumoylated by MMS21.

The protein resides in the nucleus. The protein localises to the chromosome. It is found in the telomere. The catalysed reaction is ATP + H2O = ADP + phosphate + H(+). Single-stranded DNA-dependent ATP-dependent helicase. Involved in non-homologous end joining (NHEJ) DNA double strand break repair. DNA-binding is sequence-independent but has a high affinity to nicks in double-stranded DNA and to the ends of duplex DNA. Binds to naturally occurring chromosomal ends, and therefore provides chromosomal end protection. Appears to have a role in recruitment of telomerase and CDC13 to the telomere and the subsequent telomere elongation. Required also for telomere recombination to repair telomeric ends in the absence of telomerase. KU70, of the KU70/KU80 heterodimer, binds to the stem loop of TLC1, the RNA component of telomerase. Involved in telomere maintenance. Interacts with telomeric repeats and subtelomeric sequences thereby controlling telomere length and protecting against subtelomeric rearrangement. Maintains telomeric chromatin, which is involved in silencing the expression of genes located at the telomere. Required for mating-type switching. In Saccharomyces cerevisiae (strain ATCC 204508 / S288c) (Baker's yeast), this protein is ATP-dependent DNA helicase II subunit 1 (YKU70).